The chain runs to 234 residues: AGEDHGRGPYVQADLAYAYEHITHDYPEQTGTKKDKISTVSDYFRNIRTHSIHPRVSVGYDFGGWRIAADYARYRKWNDNKYSVDIKELENKNQNKRDLKTENQENGTFHAVSSLGLSAVYDFKLNDKFKPYIGARVAYGHVRHSIDSTKKTTKFLTSSYGGLNPTVYTEENTQNAHHQSNSIRRVGLGVIAGVGFDITPKLTLDTGYRYHYWGRLENTRFKTHEASLGVRYRF.

A signal peptide is located at residue A1.

It belongs to the opacity porin family.

The protein localises to the cell outer membrane. Functionally, implicated in a number of adherence functions. OPA proteins are implicated in pathogenesis and are subject to phase variation. This Neisseria gonorrhoeae protein is Opacity protein opA55 (opaE).